The sequence spans 452 residues: Mitochondrial distribution and morphology protein 10 (452 aa).

The protein belongs to the MDM10 family. Component of the ER-mitochondria encounter structure (ERMES) or MDM complex, composed of MMM1, MDM10, MDM12 and MDM34. Associates with the mitochondrial outer membrane sorting assembly machinery SAM(core) complex.

It localises to the mitochondrion outer membrane. Its function is as follows. Component of the ERMES/MDM complex, which serves as a molecular tether to connect the endoplasmic reticulum and mitochondria. Components of this complex are involved in the control of mitochondrial shape and protein biogenesis and may function in phospholipid exchange. MDM10 is involved in the late assembly steps of the general translocase of the mitochondrial outer membrane (TOM complex). Functions in the TOM40-specific route of the assembly of outer membrane beta-barrel proteins, including the association of TOM40 with the receptor TOM22 and small TOM proteins. Can associate with the SAM(core) complex as well as the MDM12-MMM1 complex, both involved in late steps of the major beta-barrel assembly pathway, that is responsible for biogenesis of all outer membrane beta-barrel proteins. May act as a switch that shuttles between both complexes and channels precursor proteins into the TOM40-specific pathway. Plays a role in mitochondrial morphology and in the inheritance of mitochondria. This Kluyveromyces lactis (strain ATCC 8585 / CBS 2359 / DSM 70799 / NBRC 1267 / NRRL Y-1140 / WM37) (Yeast) protein is Mitochondrial distribution and morphology protein 10.